The following is a 450-amino-acid chain: 3-phosphoshikimate 1-carboxyvinyltransferase (450 aa).

Positions 23, 24, and 28 each coordinate 3-phosphoshikimate. Lys23 lines the phosphoenolpyruvate pocket. Positions 96 and 124 each coordinate phosphoenolpyruvate. Residues Ser167, Ser168, Gln169, Ser196, Glu311, and His340 each coordinate 3-phosphoshikimate. Residue Gln169 coordinates phosphoenolpyruvate. The Proton acceptor role is filled by Glu311. Phosphoenolpyruvate is bound by residues Arg344, Arg385, and Lys410. The interval 426–450 is disordered; that stretch reads GQGWGYPQPRSGQRARRATGQGSGG.

Belongs to the EPSP synthase family. As to quaternary structure, monomer.

Its subcellular location is the cytoplasm. The enzyme catalyses 3-phosphoshikimate + phosphoenolpyruvate = 5-O-(1-carboxyvinyl)-3-phosphoshikimate + phosphate. The protein operates within metabolic intermediate biosynthesis; chorismate biosynthesis; chorismate from D-erythrose 4-phosphate and phosphoenolpyruvate: step 6/7. In terms of biological role, catalyzes the transfer of the enolpyruvyl moiety of phosphoenolpyruvate (PEP) to the 5-hydroxyl of shikimate-3-phosphate (S3P) to produce enolpyruvyl shikimate-3-phosphate and inorganic phosphate. The polypeptide is 3-phosphoshikimate 1-carboxyvinyltransferase (Mycobacterium bovis (strain ATCC BAA-935 / AF2122/97)).